The chain runs to 226 residues: Isoprenyl transferase (226 aa).

Asp12 is an active-site residue. Position 12 (Asp12) interacts with Mg(2+). Substrate contacts are provided by residues 13–16 (GNAR), Trp17, Lys25, His29, and 57–59 (SFE). The active-site Proton acceptor is Asn60. Residues Trp61, Arg63, Arg174, and 180-182 (RIS) each bind substrate. Residue Glu193 participates in Mg(2+) binding.

This sequence belongs to the UPP synthase family. In terms of assembly, homodimer. The cofactor is Mg(2+).

Functionally, catalyzes the condensation of isopentenyl diphosphate (IPP) with allylic pyrophosphates generating different type of terpenoids. This is Isoprenyl transferase from Rickettsia prowazekii (strain Madrid E).